A 498-amino-acid chain; its full sequence is Probable cytosol aminopeptidase (498 aa).

The Mn(2+) site is built by Lys-264 and Asp-269. Lys-276 is a catalytic residue. Positions 287, 346, and 348 each coordinate Mn(2+). Arg-350 is a catalytic residue.

The protein belongs to the peptidase M17 family. Requires Mn(2+) as cofactor.

The protein resides in the cytoplasm. The catalysed reaction is Release of an N-terminal amino acid, Xaa-|-Yaa-, in which Xaa is preferably Leu, but may be other amino acids including Pro although not Arg or Lys, and Yaa may be Pro. Amino acid amides and methyl esters are also readily hydrolyzed, but rates on arylamides are exceedingly low.. It catalyses the reaction Release of an N-terminal amino acid, preferentially leucine, but not glutamic or aspartic acids.. Functionally, presumably involved in the processing and regular turnover of intracellular proteins. Catalyzes the removal of unsubstituted N-terminal amino acids from various peptides. This is Probable cytosol aminopeptidase from Brucella anthropi (strain ATCC 49188 / DSM 6882 / CCUG 24695 / JCM 21032 / LMG 3331 / NBRC 15819 / NCTC 12168 / Alc 37) (Ochrobactrum anthropi).